Reading from the N-terminus, the 165-residue chain is 6,7-dimethyl-8-ribityllumazine synthase (165 aa).

5-amino-6-(D-ribitylamino)uracil contacts are provided by residues phenylalanine 22, 56–58 (SME), and 80–82 (AVI). (2S)-2-hydroxy-3-oxobutyl phosphate is bound at residue 85–86 (ET). Histidine 88 functions as the Proton donor in the catalytic mechanism. 5-amino-6-(D-ribitylamino)uracil is bound at residue phenylalanine 113. Arginine 127 provides a ligand contact to (2S)-2-hydroxy-3-oxobutyl phosphate.

It belongs to the DMRL synthase family.

The enzyme catalyses (2S)-2-hydroxy-3-oxobutyl phosphate + 5-amino-6-(D-ribitylamino)uracil = 6,7-dimethyl-8-(1-D-ribityl)lumazine + phosphate + 2 H2O + H(+). It participates in cofactor biosynthesis; riboflavin biosynthesis; riboflavin from 2-hydroxy-3-oxobutyl phosphate and 5-amino-6-(D-ribitylamino)uracil: step 1/2. Functionally, catalyzes the formation of 6,7-dimethyl-8-ribityllumazine by condensation of 5-amino-6-(D-ribitylamino)uracil with 3,4-dihydroxy-2-butanone 4-phosphate. This is the penultimate step in the biosynthesis of riboflavin. The sequence is that of 6,7-dimethyl-8-ribityllumazine synthase from Thermotoga sp. (strain RQ2).